We begin with the raw amino-acid sequence, 288 residues long: Acetyl-coenzyme A carboxylase carboxyl transferase subunit beta (288 aa).

Residues 34-288 enclose the CoA carboxyltransferase N-terminal domain; the sequence is LFAKCPACKH…HLVAFHGGVS (255 aa). Zn(2+) contacts are provided by cysteine 38, cysteine 41, cysteine 56, and cysteine 59. Residues 38-59 form a C4-type zinc finger; that stretch reads CPACKHMIYQKDLGPAKICPTC.

Belongs to the AccD/PCCB family. In terms of assembly, acetyl-CoA carboxylase is a heterohexamer composed of biotin carboxyl carrier protein (AccB), biotin carboxylase (AccC) and two subunits each of ACCase subunit alpha (AccA) and ACCase subunit beta (AccD). Requires Zn(2+) as cofactor.

Its subcellular location is the cytoplasm. The catalysed reaction is N(6)-carboxybiotinyl-L-lysyl-[protein] + acetyl-CoA = N(6)-biotinyl-L-lysyl-[protein] + malonyl-CoA. Its pathway is lipid metabolism; malonyl-CoA biosynthesis; malonyl-CoA from acetyl-CoA: step 1/1. Its function is as follows. Component of the acetyl coenzyme A carboxylase (ACC) complex. Biotin carboxylase (BC) catalyzes the carboxylation of biotin on its carrier protein (BCCP) and then the CO(2) group is transferred by the transcarboxylase to acetyl-CoA to form malonyl-CoA. The protein is Acetyl-coenzyme A carboxylase carboxyl transferase subunit beta of Streptococcus equi subsp. zooepidemicus (strain MGCS10565).